The chain runs to 320 residues: MSSMPNHQKVVLVGDGAVGSSYAFAMAQQGIAEEFVIVDVVKDRTKGDALDLEDAQAFTAPKKIYSGEYSDCKDADLVVITAGAPQKPGESRLDLVNKNLNILSSIVKPVVDSGFDGIFLVAANPVDILTYATWKFSGFPKDRVIGSGTSLDSSRLRVALGKQFNVDPRSVDAYIMGEHGDSEFAAYSTATIGTRPVRDVAKEQGVSDEDLAKLEDGVRNKAYDIINLKGATFYGIGTALMRISKAILRDENAVLPVGAYMDGQYGLNDIYIGTPAVIGGTGLKQIIESPLSADELKKMQDSAATLKKVLNDGLAELENK.

Residues V18, D39, R44, Y69, and 83-84 (GA) each bind NAD(+). Q86 and R92 together coordinate substrate. NAD(+) contacts are provided by residues S105, 122–124 (AAN), and S147. Position 124–127 (124–127 (NPVD)) interacts with substrate. 152–155 (DSSR) provides a ligand contact to substrate. H179 acts as the Proton acceptor in catalysis. Y223 carries the phosphotyrosine modification. T232 contacts substrate.

Belongs to the LDH/MDH superfamily. LDH family. As to quaternary structure, homotetramer.

The protein resides in the cytoplasm. It catalyses the reaction (S)-lactate + NAD(+) = pyruvate + NADH + H(+). The protein operates within fermentation; pyruvate fermentation to lactate; (S)-lactate from pyruvate: step 1/1. In terms of biological role, catalyzes the conversion of lactate to pyruvate. The polypeptide is L-lactate dehydrogenase 1 (Lactiplantibacillus plantarum (strain ATCC BAA-793 / NCIMB 8826 / WCFS1) (Lactobacillus plantarum)).